A 449-amino-acid chain; its full sequence is Putative transporter C83.11 (449 aa).

A run of 9 helical transmembrane segments spans residues 7-27 (LSHI…LWYI), 47-67 (VTLT…CLLF), 84-104 (VLYT…FGSL), 109-129 (IPVS…VLAY), 136-156 (VYSA…TLAC), 164-184 (IVGL…NIFG), 205-225 (LNLL…VWLY), 255-275 (ILAF…ASLI), and 278-298 (IFVI…TQGS). Phosphoserine is present on residues Ser-348 and Ser-352. Tyr-355 carries the post-translational modification Phosphotyrosine. A compositionally biased stretch (polar residues) spans 382 to 415 (NSVYSNEGVTSSVSGNATPASVRQSTQNDFSNSN). Residues 382-416 (NSVYSNEGVTSSVSGNATPASVRQSTQNDFSNSNI) form a disordered region.

Belongs to the TPT transporter family.

It is found in the membrane. The protein is Putative transporter C83.11 of Schizosaccharomyces pombe (strain 972 / ATCC 24843) (Fission yeast).